Here is a 198-residue protein sequence, read N- to C-terminus: Dephospho-CoA kinase (198 aa).

The 196-residue stretch at V3 to A198 folds into the DPCK domain. G11–T16 lines the ATP pocket.

It belongs to the CoaE family.

It localises to the cytoplasm. The catalysed reaction is 3'-dephospho-CoA + ATP = ADP + CoA + H(+). It participates in cofactor biosynthesis; coenzyme A biosynthesis; CoA from (R)-pantothenate: step 5/5. In terms of biological role, catalyzes the phosphorylation of the 3'-hydroxyl group of dephosphocoenzyme A to form coenzyme A. This Methylococcus capsulatus (strain ATCC 33009 / NCIMB 11132 / Bath) protein is Dephospho-CoA kinase.